A 736-amino-acid polypeptide reads, in one-letter code: Transcriptional repressor CTCF (736 aa).

At Met1 the chain carries N-acetylmethionine. Lys18 participates in a covalent cross-link: Glycyl lysine isopeptide (Lys-Gly) (interchain with G-Cter in SUMO2). Residue Lys74 forms a Glycyl lysine isopeptide (Lys-Gly) (interchain with G-Cter in SUMO) linkage. Positions 180 to 211 (QGELPPQEDSSWQKDPDYQPPAKKTKKTKKSK) are disordered. The segment covering 202 to 211 (KKTKKTKKSK) has biased composition (basic residues). Lys219 is covalently cross-linked (Glycyl lysine isopeptide (Lys-Gly) (interchain with G-Cter in SUMO2)). The segment at 266-288 (FQCELCSYTCPRRSNLDRHMKSH) adopts a C2H2-type 1 zinc-finger fold. At Thr289 the chain carries Phosphothreonine. The segment at 294 to 316 (HKCHLCGRAFRTVTLLRNHLNTH) adopts a C2H2-type 2 zinc-finger fold. Residue Thr317 is modified to Phosphothreonine. C2H2-type zinc fingers lie at residues 322-345 (HKCP…RYKH) and 351-373 (FKCS…IRSH). Phosphothreonine is present on Thr374. Residues 379–401 (FQCSLCSYASRDTYKLKRHMRTH) form a C2H2-type 5 zinc finger. Residue Ser402 is modified to Phosphoserine. 5 C2H2-type zinc fingers span residues 407–430 (YECY…LQKH), 437–460 (FHCP…RKQH), 467–489 (KKCR…QKSH), 495–517 (FKCD…KRTH), and 523–546 (YACS…KRYH). A C2H2-type 11; atypical zinc finger spans residues 555–577 (FVCSKCGKTFTRRNTMARHADNC). The tract at residues 573–686 (HADNCAGPDG…TAIIQVEDQN (114 aa)) is disordered. The span at 593–604 (KSKRGRKRKMRS) shows a compositional bias: basic residues. 3 positions are modified to phosphoserine: Ser609, Ser610, and Ser612. Positions 610-637 (SDSEENAEPDLDDNEEEEEPAVEIEPEP) are enriched in acidic residues. Pro residues predominate over residues 638-656 (EPQPQPPPPPQPVAPAPPP). Residues 667 to 686 (RTNQPKQNQPTAIIQVEDQN) are compositionally biased toward polar residues. A Glycyl lysine isopeptide (Lys-Gly) (interchain with G-Cter in SUMO); alternate cross-link involves residue Lys698. Lys698 is covalently cross-linked (Glycyl lysine isopeptide (Lys-Gly) (interchain with G-Cter in SUMO2); alternate). The tract at residues 699–726 (KEPDAEPAEGEEEEAQAATTDAPNGDLT) is disordered. Residues 703–713 (AEPAEGEEEEA) are compositionally biased toward acidic residues.

It belongs to the CTCF zinc-finger protein family. In terms of assembly, interacts with CHD8. Interacts with LLPH. Interacts with CENPE. Interacts with BRD2; promoting BRD2 recruitment to chromatin. Post-translationally, sumoylated on Lys-74 and Lys-698; sumoylation of CTCF contributes to the repressive function of CTCF on the MYC P2 promoter.

The protein localises to the nucleus. It is found in the nucleoplasm. It localises to the chromosome. Its subcellular location is the centromere. Chromatin binding factor that binds to DNA sequence specific sites and regulates the 3D structure of chromatin. Binds together strands of DNA, thus forming chromatin loops, and anchors DNA to cellular structures, such as the nuclear lamina. Defines the boundaries between active and heterochromatic DNA via binding to chromatin insulators, thereby preventing interaction between promoter and nearby enhancers and silencers. Plays a critical role in the epigenetic regulation. Participates in the allele-specific gene expression at the imprinted IGF2/H19 gene locus. On the maternal allele, binding within the H19 imprinting control region (ICR) mediates maternally inherited higher-order chromatin conformation to restrict enhancer access to IGF2. Mediates interchromosomal association between IGF2/H19 and WSB1/NF1 and may direct distant DNA segments to a common transcription factory. Regulates asynchronous replication of IGF2/H19. Plays a critical role in gene silencing over considerable distances in the genome. Preferentially interacts with unmethylated DNA, preventing spreading of CpG methylation and maintaining methylation-free zones. Inversely, binding to target sites is prevented by CpG methylation. Plays an important role in chromatin remodeling. Can dimerize when it is bound to different DNA sequences, mediating long-range chromatin looping. Causes local loss of histone acetylation and gain of histone methylation in the beta-globin locus, without affecting transcription. When bound to chromatin, it provides an anchor point for nucleosomes positioning. Seems to be essential for homologous X-chromosome pairing. May participate with Tsix in establishing a regulatable epigenetic switch for X chromosome inactivation. May play a role in preventing the propagation of stable methylation at the escape genes from X-inactivation. Involved in sister chromatid cohesion. Associates with both centromeres and chromosomal arms during metaphase and required for cohesin localization to CTCF sites. Plays a role in the recruitment of CENPE to the pericentromeric/centromeric regions of the chromosome during mitosis. Acts as a transcriptional repressor binding to promoters of vertebrate MYC gene and BAG1 gene. Also binds to the PLK and PIM1 promoters. Acts as a transcriptional activator of APP. Regulates APOA1/C3/A4/A5 gene cluster and controls MHC class II gene expression. Plays an essential role in oocyte and preimplantation embryo development by activating or repressing transcription. Seems to act as tumor suppressor. This chain is Transcriptional repressor CTCF (Ctcf), found in Mus musculus (Mouse).